Reading from the N-terminus, the 460-residue chain is Cysteine--tRNA ligase (460 aa).

Residue C28 participates in Zn(2+) binding. A 'HIGH' region motif is present at residues 30-40 (MTVYDYCHLGH). The Zn(2+) site is built by C209, H234, and E238. A 'KMSKS' region motif is present at residues 266–270 (KMSKS). Residue K269 participates in ATP binding.

This sequence belongs to the class-I aminoacyl-tRNA synthetase family. Monomer. It depends on Zn(2+) as a cofactor.

Its subcellular location is the cytoplasm. The catalysed reaction is tRNA(Cys) + L-cysteine + ATP = L-cysteinyl-tRNA(Cys) + AMP + diphosphate. The polypeptide is Cysteine--tRNA ligase (Pseudomonas putida (strain ATCC 700007 / DSM 6899 / JCM 31910 / BCRC 17059 / LMG 24140 / F1)).